We begin with the raw amino-acid sequence, 1411 residues long: Early endosome antigen 1 (1411 aa).

A disordered region spans residues 1-27; that stretch reads MLRRILQRTPGRVGSQGSDLDSSATPI. Over residues 15-27 the composition is skewed to polar residues; the sequence is SQGSDLDSSATPI. The C2H2-type zinc finger occupies 41 to 64; sequence FICPQCMKSLGSADELFKHYEAVH. 2 positions are modified to phosphoserine: Ser52 and Ser70. Positions 74 to 1348 form a coiled coil; that stretch reads GESNLALKRD…IKHTQALNRK (1275 aa). The tract at residues 473–501 is disordered; that stretch reads VTNSTELQHQLDKTKQQHQEQQALQQSTT. Residues 481-490 are compositionally biased toward basic and acidic residues; it reads HQLDKTKQQH. An FYVE-type zinc finger spans residues 1352 to 1410; it reads DNEVQNCMACGKGFSVTVRRHHCRQCGNIFCAECSAKNALTPSSKKPVRVCDACFNDLQ. 8 residues coordinate Zn(2+): Cys1358, Cys1361, Cys1374, Cys1377, Cys1382, Cys1385, Cys1402, and Cys1405.

In terms of assembly, homodimer. Binds STX6. Binds RAB5A, RAB5B, RAB5C and RAB22A that have been activated by GTP-binding. Interacts with RAB31. Interacts with ERBB2. Interacts with SAMD9 and SAMD9L. May interact with PLEKHF2.

It is found in the cytoplasm. Its subcellular location is the early endosome membrane. Functionally, binds phospholipid vesicles containing phosphatidylinositol 3-phosphate and participates in endosomal trafficking. This is Early endosome antigen 1 (EEA1) from Homo sapiens (Human).